Here is a 617-residue protein sequence, read N- to C-terminus: V-type proton ATPase catalytic subunit A (617 aa).

257 to 264 contributes to the ATP binding site; that stretch reads GAFGCGKT.

It belongs to the ATPase alpha/beta chains family. In terms of assembly, V-ATPase is a heteromultimeric enzyme composed of a peripheral catalytic V1 complex (components A to H) attached to an integral membrane V0 proton pore complex (components: a, c, c', c'', d, e, f and VOA1). Post-translationally, is a probable target for sumoylation.

The protein resides in the vacuole membrane. The enzyme catalyses ATP + H2O + 4 H(+)(in) = ADP + phosphate + 5 H(+)(out). Catalytic subunit of the V1 complex of vacuolar(H+)-ATPase (V-ATPase), a multisubunit enzyme composed of a peripheral complex (V1) that hydrolyzes ATP and a membrane integral complex (V0) that translocates protons. V-ATPase is responsible for acidifying and maintaining the pH of intracellular compartments. Mediates oxidative stress response, filamentous growth, and plays an important role in virulence. This chain is V-type proton ATPase catalytic subunit A, found in Candida albicans (strain SC5314 / ATCC MYA-2876) (Yeast).